Reading from the N-terminus, the 518-residue chain is Chromosomal replication initiator protein DnaA (518 aa).

The domain I, interacts with DnaA modulators stretch occupies residues 1–76 (METDGGDFPS…RALSEAYGSP (76 aa)). The segment at 76–176 (PIRLAVTVDP…RRPTTRIENS (101 aa)) is domain II. The segment at 91–174 (LTPERTGEHS…QPRRPTTRIE (84 aa)) is disordered. Basic and acidic residues predominate over residues 124–135 (DGLHLDERRSGS). Acidic residues predominate over residues 136 to 147 (LEEDSPLDDSDP). The interval 177 to 393 (RLNPKYIFET…GALIRVTAFA (217 aa)) is domain III, AAA+ region. Residues Gly-221, Gly-223, Lys-224, and Thr-225 each coordinate ATP. Residues 394-518 (SLNRQPVDMQ…TNRIKKQSGA (125 aa)) are domain IV, binds dsDNA.

This sequence belongs to the DnaA family. Oligomerizes as a right-handed, spiral filament on DNA at oriC.

It localises to the cytoplasm. In terms of biological role, plays an essential role in the initiation and regulation of chromosomal replication. ATP-DnaA binds to the origin of replication (oriC) to initiate formation of the DNA replication initiation complex once per cell cycle. Binds the DnaA box (a 9 base pair repeat at the origin) and separates the double-stranded (ds)DNA. Forms a right-handed helical filament on oriC DNA; dsDNA binds to the exterior of the filament while single-stranded (ss)DNA is stabiized in the filament's interior. The ATP-DnaA-oriC complex binds and stabilizes one strand of the AT-rich DNA unwinding element (DUE), permitting loading of DNA polymerase. After initiation quickly degrades to an ADP-DnaA complex that is not apt for DNA replication. Binds acidic phospholipids. This is Chromosomal replication initiator protein DnaA from Kineococcus radiotolerans (strain ATCC BAA-149 / DSM 14245 / SRS30216).